Here is a 381-residue protein sequence, read N- to C-terminus: MMMHSRNRSWTLTLLALGVVLATSAEDLPRSNRIAVPGEPLYYLMADAGPVVTPNEALKRTNRSLLKWWDDLFPRNNNNCCNNNNNNLLYPTAPLLPAPAVPNNCNGLQLQDLDPFKQMKLFKKLPELFPTASPCGQCGGGCGQNNYVAPAPQSPSYGGDGYGVLPNGGYIKPDTEYNGPGDGDAGYVAPAAPAYEAPAPPAPAYEAPAPPAPAYEAPAPAAPAYEAPAPAAPAYEAPTTDYSAPAPPAPAYEPPASSYTQGYSQPAQPSYVGAPPAQIVYQPIIYLSTPLASKSSTSQVEYDDQKYVTPTAPPPPPPPAPVYEAPSQNCYQPAAPPAPNYATPSCQTPIRLSLIDQPYRVAPELFEEYNYRLALASQNIL.

The first 25 residues, 1-25 (MMMHSRNRSWTLTLLALGVVLATSA), serve as a signal peptide directing secretion. Tandem repeats lie at residues 190–199 (PAAPAYEAPA), 200–209 (PPAPAYEAPA), 210–219 (PPAPAYEAPA), 220–229 (PAAPAYEAPA), 230–239 (PAAPAYEAPT), and 247–256 (PPAPAYEPPA). The segment at 190-256 (PAAPAYEAPA…PPAPAYEPPA (67 aa)) is 6 X 10 AA approximate tandem repeats of P-[AP]-A-P-A-Y-E-[AP]-P-[AT]. 2 disordered regions span residues 236 to 270 (EAPTTDYSAPAPPAPAYEPPASSYTQGYSQPAQPS) and 309 to 329 (TPTAPPPPPPPAPVYEAPSQN). Residues 311–321 (TAPPPPPPPAP) are compositionally biased toward pro residues.

Sulfated by pip; may be involved in embryo dorsal-ventral axis determination. Sulfation by pip may occur on covalently bound glycosaminoglycans. In terms of processing, may undergo both disulfide and non-disulfide cross-linking upon incorporation into the vitelline membrane. Present in the perivitelline space of stage 10 egg chambers and in the vitelline membrane adjacent to the oocyte in stage 13 and 14 egg chambers (at protein level).

Its subcellular location is the secreted. It is found in the extracellular space. The protein resides in the extracellular matrix. Its function is as follows. Minor protein component of the vitelline membrane. Involved in vitelline membrane biogenesis during late stages of oogenesis. Required for efficient disulfide and non-disulfide cross-linking of several vitelline membrane components. The polypeptide is Protein palisade (Drosophila melanogaster (Fruit fly)).